Consider the following 323-residue polypeptide: RING-H2 finger protein ATL32 (323 aa).

The signal sequence occupies residues 1-28 (MMTRVECFNPHRWIILHVAIIIQSKANA). Residues 47–67 (TTVFAVLVTLFFLTGLLSVYI) traverse the membrane as a helical segment. The RING-type; atypical zinc finger occupies 124 to 166 (CAICLNELEDHETVRLLPICNHLFHIDCIDTWLYSHATCPVCR). The disordered stretch occupies residues 210-229 (SSEISGKFPRSNSTGHSMDR).

This sequence belongs to the RING-type zinc finger family. ATL subfamily.

It is found in the membrane. It catalyses the reaction S-ubiquitinyl-[E2 ubiquitin-conjugating enzyme]-L-cysteine + [acceptor protein]-L-lysine = [E2 ubiquitin-conjugating enzyme]-L-cysteine + N(6)-ubiquitinyl-[acceptor protein]-L-lysine.. Its pathway is protein modification; protein ubiquitination. The chain is RING-H2 finger protein ATL32 (ATL32) from Arabidopsis thaliana (Mouse-ear cress).